The chain runs to 455 residues: Ectonucleoside triphosphate diphosphohydrolase 6 (455 aa).

At 1–12 (MRKIPNHGTLRM) the chain is on the cytoplasmic side. A helical transmembrane segment spans residues 13 to 32 (TKVAYPLGLCVGLFIYVAYI). Residues 33–455 (KWHRASAAQA…SLKRQKVPAL (423 aa)) are Lumenal-facing. Catalysis depends on E196, which acts as the Proton acceptor. 2 disulfide bridges follow: C297/C327 and C387/C401.

It belongs to the GDA1/CD39 NTPase family. Mg(2+) serves as cofactor. Ca(2+) is required as a cofactor. N-glycosylated.

The protein resides in the golgi apparatus membrane. It localises to the secreted. The protein localises to the cell membrane. It catalyses the reaction a ribonucleoside 5'-diphosphate + H2O = a ribonucleoside 5'-phosphate + phosphate + H(+). The enzyme catalyses IDP + H2O = IMP + phosphate + H(+). It carries out the reaction GDP + H2O = GMP + phosphate + H(+). The catalysed reaction is UDP + H2O = UMP + phosphate + H(+). Its function is as follows. Catalyzes the hydrolysis of nucleoside triphosphates and diphosphates in a calcium- or magnesium-dependent manner. Has a strong preference for nucleoside diphosphates, preferentially hydrolyzes GDP, IDP, and UDP, with slower hydrolysis of CDP, ITP, GTP, CTP, ADP, and UTP and virtually no hydrolysis of ATP. The membrane bound form might support glycosylation reactions in the Golgi apparatus and, when released from cells, might catalyze the hydrolysis of extracellular nucleotides. In Mus musculus (Mouse), this protein is Ectonucleoside triphosphate diphosphohydrolase 6.